The primary structure comprises 653 residues: 4-hydroxy-2,2'-bipyrrole-5-methanol synthase PigH (653 aa).

Residues Glu7–Glu84 enclose the Carrier domain. At Ser45 the chain carries O-(pantetheine 4'-phosphoryl)serine. Gly354–Tyr355 contributes to the pyridoxal 5'-phosphate binding site. Residue His379 participates in substrate binding. Residues Ser426, His454, and Thr482 each coordinate pyridoxal 5'-phosphate. Position 485 is an N6-(pyridoxal phosphate)lysine (Lys485). A helical transmembrane segment spans residues Val512 to Met532.

It depends on pyridoxal 5'-phosphate as a cofactor.

It is found in the membrane. It functions in the pathway antibiotic biosynthesis; prodigiosin biosynthesis. Functionally, involved in the biosynthesis of 4-methoxy-2,2'-bipyrrole-5-carbaldehyde (MBC), one of the terminal products involved in the biosynthesis of the red antibiotic prodigiosin (Pig). Carrier of the L-malonyl group (malonyl-S-PigH), which is decarboxylated by PigJ to yield a C2 carbanion acetyl-S-PigH. Then the pyrrolyl group of pyrrolyl-S-cysteinyl PigJ intermediate is captured by the C2 carbanion acetyl-S-PigH to yield the pyrrolyl-beta-ketoacyl-S-PigH. In the last step, PigH catalyzes the decarboxylative condensation between the pyrrolyl-beta-ketoacyl (pyrrolyl-beta-ketoacyl-S-PigH) and L-serine to yield 4-hydroxy-2,2'-bipyrrole-5-methanol (HBM). The sequence is that of 4-hydroxy-2,2'-bipyrrole-5-methanol synthase PigH from Serratia sp. (strain ATCC 39006) (Prodigiosinella confusarubida).